Here is a 1007-residue protein sequence, read N- to C-terminus: Aldehyde reductase lnbA (1007 aa).

Residues 35–428 (QVRQSPSSIA…GRVDHQIKVR (394 aa)) form an adenylation (A) domain region. The Carrier domain occupies 540–617 (TLCQDTQTVL…ALASIIDHAK (78 aa)). Ser-577 carries the O-(pantetheine 4'-phosphoryl)serine modification. The interval 659 to 998 (IFITGATGFV…PTLDCSLLKK (340 aa)) is short-chain dehydrogenase/reductase (R) domain.

This sequence belongs to the NRP synthetase family.

The catalysed reaction is L-tyrosinal + AMP + diphosphate + NADP(+) = L-tyrosine + ATP + NADPH + H(+). It participates in secondary metabolite biosynthesis. In terms of biological role, non-canonical nonribosomal peptide synthetase; part of the lnb gene cluster that mediates the biosynthesis of diastereomeric piperazines. Lna and lnb clusters encode sets of enzymes that produce overlapping sets of previously undescribed metabolites such as piperazinomycin-like metabolites or morpholine. The lna and lnb biosynthetic pathways appear to be part of a signaling network that controls the formation of sclerotia, a resilient overwintering structure. One primary function of the non-canonical nonribosomal peptide synthetases lnaA and lnbA consists in the reduction of L-tyrosine. The presence in the clusters of tailoring enzymes such as the oxidoreductases lnaB, lnbB, lnaE or lnbE, as well as of the cytochrome P450 monooxygenases lnaC, lnaD, or lnbC, might explain formation of various diastereomeric piperazines. This is Aldehyde reductase lnbA from Aspergillus flavus (strain ATCC 200026 / FGSC A1120 / IAM 13836 / NRRL 3357 / JCM 12722 / SRRC 167).